The sequence spans 273 residues: Large ribosomal subunit protein uL2 (273 aa).

2 disordered regions span residues 31-50 and 221-273; these read APLLDSKSKTGGRNNLGRIT and RGTA…RRGK. Over residues 253 to 273 the composition is skewed to basic residues; it reads KGKKTRHNKRTDKYIVRRRGK.

Belongs to the universal ribosomal protein uL2 family. As to quaternary structure, part of the 50S ribosomal subunit. Forms a bridge to the 30S subunit in the 70S ribosome.

Its function is as follows. One of the primary rRNA binding proteins. Required for association of the 30S and 50S subunits to form the 70S ribosome, for tRNA binding and peptide bond formation. It has been suggested to have peptidyltransferase activity; this is somewhat controversial. Makes several contacts with the 16S rRNA in the 70S ribosome. The protein is Large ribosomal subunit protein uL2 of Actinobacillus pleuropneumoniae serotype 7 (strain AP76).